Reading from the N-terminus, the 495-residue chain is Aspartyl/glutamyl-tRNA(Asn/Gln) amidotransferase subunit B (495 aa).

This sequence belongs to the GatB/GatE family. GatB subfamily. Heterotrimer of A, B and C subunits.

It carries out the reaction L-glutamyl-tRNA(Gln) + L-glutamine + ATP + H2O = L-glutaminyl-tRNA(Gln) + L-glutamate + ADP + phosphate + H(+). The enzyme catalyses L-aspartyl-tRNA(Asn) + L-glutamine + ATP + H2O = L-asparaginyl-tRNA(Asn) + L-glutamate + ADP + phosphate + 2 H(+). Allows the formation of correctly charged Asn-tRNA(Asn) or Gln-tRNA(Gln) through the transamidation of misacylated Asp-tRNA(Asn) or Glu-tRNA(Gln) in organisms which lack either or both of asparaginyl-tRNA or glutaminyl-tRNA synthetases. The reaction takes place in the presence of glutamine and ATP through an activated phospho-Asp-tRNA(Asn) or phospho-Glu-tRNA(Gln). The sequence is that of Aspartyl/glutamyl-tRNA(Asn/Gln) amidotransferase subunit B from Methylocella silvestris (strain DSM 15510 / CIP 108128 / LMG 27833 / NCIMB 13906 / BL2).